The following is a 306-amino-acid chain: Agmatinase (306 aa).

Positions 126, 149, 151, 153, 230, and 232 each coordinate Mn(2+).

It belongs to the arginase family. Agmatinase subfamily. Mn(2+) is required as a cofactor.

The enzyme catalyses agmatine + H2O = urea + putrescine. Its pathway is amine and polyamine biosynthesis; putrescine biosynthesis via agmatine pathway; putrescine from agmatine: step 1/1. Its function is as follows. Catalyzes the formation of putrescine from agmatine. The sequence is that of Agmatinase from Shigella boydii serotype 18 (strain CDC 3083-94 / BS512).